The chain runs to 547 residues: Chaperonin GroEL (547 aa).

ATP-binding positions include 30–33 (TLGP), lysine 51, 87–91 (DGTTT), glycine 415, and aspartate 495. Residues 525 to 547 (PDEKEAGGGAPDMGGMGGMGGMM) form a disordered region. Over residues 531–547 (GGGAPDMGGMGGMGGMM) the composition is skewed to gly residues.

The protein belongs to the chaperonin (HSP60) family. Forms a cylinder of 14 subunits composed of two heptameric rings stacked back-to-back. Interacts with the co-chaperonin GroES.

It localises to the cytoplasm. The enzyme catalyses ATP + H2O + a folded polypeptide = ADP + phosphate + an unfolded polypeptide.. Functionally, together with its co-chaperonin GroES, plays an essential role in assisting protein folding. The GroEL-GroES system forms a nano-cage that allows encapsulation of the non-native substrate proteins and provides a physical environment optimized to promote and accelerate protein folding. The protein is Chaperonin GroEL of Chromohalobacter salexigens (strain ATCC BAA-138 / DSM 3043 / CIP 106854 / NCIMB 13768 / 1H11).